The primary structure comprises 105 residues: Large ribosomal subunit protein bL21 (105 aa).

This sequence belongs to the bacterial ribosomal protein bL21 family. As to quaternary structure, part of the 50S ribosomal subunit. Contacts protein L20.

This protein binds to 23S rRNA in the presence of protein L20. This chain is Large ribosomal subunit protein bL21, found in Thermotoga maritima (strain ATCC 43589 / DSM 3109 / JCM 10099 / NBRC 100826 / MSB8).